The following is a 377-amino-acid chain: UDP-N-acetylglucosamine--N-acetylmuramyl-(pentapeptide) pyrophosphoryl-undecaprenol N-acetylglucosamine transferase (377 aa).

Residues 29–31, N142, R179, S213, and Q308 each bind UDP-N-acetyl-alpha-D-glucosamine; that span reads TAG.

This sequence belongs to the glycosyltransferase 28 family. MurG subfamily.

Its subcellular location is the cell membrane. The enzyme catalyses di-trans,octa-cis-undecaprenyl diphospho-N-acetyl-alpha-D-muramoyl-L-alanyl-D-glutamyl-meso-2,6-diaminopimeloyl-D-alanyl-D-alanine + UDP-N-acetyl-alpha-D-glucosamine = di-trans,octa-cis-undecaprenyl diphospho-[N-acetyl-alpha-D-glucosaminyl-(1-&gt;4)]-N-acetyl-alpha-D-muramoyl-L-alanyl-D-glutamyl-meso-2,6-diaminopimeloyl-D-alanyl-D-alanine + UDP + H(+). Its pathway is cell wall biogenesis; peptidoglycan biosynthesis. Its function is as follows. Cell wall formation. Catalyzes the transfer of a GlcNAc subunit on undecaprenyl-pyrophosphoryl-MurNAc-pentapeptide (lipid intermediate I) to form undecaprenyl-pyrophosphoryl-MurNAc-(pentapeptide)GlcNAc (lipid intermediate II). The sequence is that of UDP-N-acetylglucosamine--N-acetylmuramyl-(pentapeptide) pyrophosphoryl-undecaprenol N-acetylglucosamine transferase from Saccharopolyspora erythraea (strain ATCC 11635 / DSM 40517 / JCM 4748 / NBRC 13426 / NCIMB 8594 / NRRL 2338).